The primary structure comprises 339 residues: GDP-fucose transporter 1 (339 aa).

8 helical membrane passes run 9-29 (SVRI…LVFL), 45-65 (LFVT…LSLL), 82-102 (LSVA…ITFN), 111-133 (VSFY…YVIL), 136-156 (STSY…LMGV), 165-185 (ISYS…LNAI), 209-229 (ACFL…VAHF), and 237-257 (FWLM…ITGL). Residues 319 to 339 (AHTIQASKDDKALQEDGQTKV) form a disordered region. Residues 325 to 339 (SKDDKALQEDGQTKV) show a composition bias toward basic and acidic residues.

Belongs to the TPT transporter family. SLC35C subfamily.

The protein localises to the golgi apparatus membrane. The catalysed reaction is GMP(out) + GDP-beta-L-fucose(in) = GMP(in) + GDP-beta-L-fucose(out). Its function is as follows. Antiporter specific for GDP-l-fucose and depending on the concomitant reverse transport of GMP. Involved in GDP-fucose import from the cytoplasm into the Golgi lumen. The polypeptide is GDP-fucose transporter 1 (slc35c1) (Nematostella vectensis (Starlet sea anemone)).